We begin with the raw amino-acid sequence, 1402 residues long: DNA-directed RNA polymerase subunit beta' (1402 aa).

Zn(2+) contacts are provided by Cys71, Cys73, Cys86, and Cys89. Mg(2+) is bound by residues Asp462, Asp464, and Asp466. Cys811, Cys885, Cys892, and Cys895 together coordinate Zn(2+).

The protein belongs to the RNA polymerase beta' chain family. In terms of assembly, the RNAP catalytic core consists of 2 alpha, 1 beta, 1 beta' and 1 omega subunit. When a sigma factor is associated with the core the holoenzyme is formed, which can initiate transcription. Mg(2+) is required as a cofactor. It depends on Zn(2+) as a cofactor.

The enzyme catalyses RNA(n) + a ribonucleoside 5'-triphosphate = RNA(n+1) + diphosphate. Its function is as follows. DNA-dependent RNA polymerase catalyzes the transcription of DNA into RNA using the four ribonucleoside triphosphates as substrates. The chain is DNA-directed RNA polymerase subunit beta' from Rhizobium etli (strain ATCC 51251 / DSM 11541 / JCM 21823 / NBRC 15573 / CFN 42).